Consider the following 759-residue polypeptide: Phosphoribosylformylglycinamidine synthase subunit PurL (759 aa).

His46 is a catalytic residue. Residues Tyr49 and Lys88 each contribute to the ATP site. Glu90 provides a ligand contact to Mg(2+). Substrate is bound by residues 91–94 and Arg113; that span reads SHNH. His92 functions as the Proton acceptor in the catalytic mechanism. Residue Asp114 participates in Mg(2+) binding. Gln237 is a binding site for substrate. Asp265 is a Mg(2+) binding site. 309-311 provides a ligand contact to substrate; it reads ESQ. Residues Asp498 and Gly535 each contribute to the ATP site. Asn536 serves as a coordination point for Mg(2+). Substrate is bound at residue Ser538.

This sequence belongs to the FGAMS family. Monomer. Part of the FGAM synthase complex composed of 1 PurL, 1 PurQ and 2 PurS subunits.

It is found in the cytoplasm. It carries out the reaction N(2)-formyl-N(1)-(5-phospho-beta-D-ribosyl)glycinamide + L-glutamine + ATP + H2O = 2-formamido-N(1)-(5-O-phospho-beta-D-ribosyl)acetamidine + L-glutamate + ADP + phosphate + H(+). Its pathway is purine metabolism; IMP biosynthesis via de novo pathway; 5-amino-1-(5-phospho-D-ribosyl)imidazole from N(2)-formyl-N(1)-(5-phospho-D-ribosyl)glycinamide: step 1/2. Functionally, part of the phosphoribosylformylglycinamidine synthase complex involved in the purines biosynthetic pathway. Catalyzes the ATP-dependent conversion of formylglycinamide ribonucleotide (FGAR) and glutamine to yield formylglycinamidine ribonucleotide (FGAM) and glutamate. The FGAM synthase complex is composed of three subunits. PurQ produces an ammonia molecule by converting glutamine to glutamate. PurL transfers the ammonia molecule to FGAR to form FGAM in an ATP-dependent manner. PurS interacts with PurQ and PurL and is thought to assist in the transfer of the ammonia molecule from PurQ to PurL. This Anaeromyxobacter dehalogenans (strain 2CP-C) protein is Phosphoribosylformylglycinamidine synthase subunit PurL.